The primary structure comprises 851 residues: Beta-galactosidase 3 (851 aa).

The N-terminal stretch at 1–29 is a signal peptide; the sequence is MAGASSYFSLRRLLLLLLPLVPLLGATTA. An N-linked (GlcNAc...) asparagine glycan is attached at Asn-35. Glu-194 (proton donor) is an active-site residue. Glu-263 (nucleophile) is an active-site residue. 4 N-linked (GlcNAc...) asparagine glycosylation sites follow: Asn-361, Asn-475, Asn-528, and Asn-533. Residues 765-851 enclose the SUEL-type lectin domain; that stretch reads GRDAAKVQLS…KTLAIEADCS (87 aa).

It belongs to the glycosyl hydrolase 35 family.

Its subcellular location is the secreted. It localises to the extracellular space. The protein resides in the apoplast. It carries out the reaction Hydrolysis of terminal non-reducing beta-D-galactose residues in beta-D-galactosides.. The sequence is that of Beta-galactosidase 3 from Oryza sativa subsp. japonica (Rice).